Reading from the N-terminus, the 90-residue chain is Mitochondrial import inner membrane translocase subunit Tim10-B (90 aa).

Residues 29 to 54 carry the Twin CX3C motif motif; the sequence is CHKKCVPPHYKEAELSKGESVCLDRC. Intrachain disulfides connect C29–C54 and C33–C50.

Belongs to the small Tim family. As to quaternary structure, heterohexamer; composed of 3 copies of TIMM9 and 3 copies of TIMM10/TIM10A, named soluble 70 kDa complex. The complex forms a 6-bladed alpha-propeller structure and associates with the TIMM22 component of the TIM22 complex. Interacts with multi-pass transmembrane proteins in transit.

Its subcellular location is the mitochondrion inner membrane. Mitochondrial intermembrane chaperone that participates in the import and insertion of multi-pass transmembrane proteins into the mitochondrial inner membrane. May also be required for the transfer of beta-barrel precursors from the TOM complex to the sorting and assembly machinery (SAM complex) of the outer membrane. Acts as a chaperone-like protein that protects the hydrophobic precursors from aggregation and guide them through the mitochondrial intermembrane space. The polypeptide is Mitochondrial import inner membrane translocase subunit Tim10-B (timm10-b) (Xenopus laevis (African clawed frog)).